Consider the following 357-residue polypeptide: Geranylgeranyl pyrophosphate synthase, chloroplastic (357 aa).

A chloroplast-targeting transit peptide spans methionine 1 to threonine 40. Residues lysine 106, arginine 109, and histidine 138 each contribute to the isopentenyl diphosphate site. 2 residues coordinate Mg(2+): aspartate 145 and aspartate 151. A dimethylallyl diphosphate-binding site is contributed by arginine 156. Position 157 (arginine 157) interacts with isopentenyl diphosphate. Lysine 242, threonine 243, glutamine 280, lysine 297, and lysine 307 together coordinate dimethylallyl diphosphate.

The protein belongs to the FPP/GGPP synthase family. The cofactor is Mg(2+).

It localises to the plastid. The protein localises to the chloroplast. The enzyme catalyses isopentenyl diphosphate + dimethylallyl diphosphate = (2E)-geranyl diphosphate + diphosphate. The catalysed reaction is isopentenyl diphosphate + (2E)-geranyl diphosphate = (2E,6E)-farnesyl diphosphate + diphosphate. It catalyses the reaction isopentenyl diphosphate + (2E,6E)-farnesyl diphosphate = (2E,6E,10E)-geranylgeranyl diphosphate + diphosphate. It functions in the pathway isoprenoid biosynthesis; farnesyl diphosphate biosynthesis; farnesyl diphosphate from geranyl diphosphate and isopentenyl diphosphate: step 1/1. Its pathway is isoprenoid biosynthesis; geranyl diphosphate biosynthesis; geranyl diphosphate from dimethylallyl diphosphate and isopentenyl diphosphate: step 1/1. It participates in isoprenoid biosynthesis; geranylgeranyl diphosphate biosynthesis; geranylgeranyl diphosphate from farnesyl diphosphate and isopentenyl diphosphate: step 1/1. Functionally, catalyzes the trans-addition of the three molecules of IPP onto DMAPP to form geranylgeranyl pyrophosphate. The chain is Geranylgeranyl pyrophosphate synthase, chloroplastic (GGPS1) from Catharanthus roseus (Madagascar periwinkle).